The chain runs to 26 residues: RELLMGIFEKNGTGKTAAFVIPLLQK.

The Q motif signature appears at 1 to 10 (RELLMGIFEK). ATP is bound at residue 11 to 16 (NGTGKT). In terms of domain architecture, Helicase ATP-binding spans 11 to 26 (NGTGKTAAFVIPLLQK).

Belongs to the DEAD box helicase family. DDX6/DHH1 subfamily.

Its subcellular location is the cytoplasm. It is found in the P-body. It carries out the reaction ATP + H2O = ADP + phosphate + H(+). Its function is as follows. ATP-dependent RNA helicase involved in mRNA turnover, and more specifically in mRNA decapping. The protein is DEAD-box ATP-dependent RNA helicase 1 of Catharanthus roseus (Madagascar periwinkle).